A 332-amino-acid chain; its full sequence is Nuclear hormone receptor family member nhr-9 (332 aa).

Residues 11–85 constitute a DNA-binding region (nuclear receptor); the sequence is ERRCAICSKL…MGMRIVTNQY (75 aa). 2 NR C4-type zinc fingers span residues 14–34 and 50–73; these read CAIC…CNAC and CINN…YNKC. Residues 101 to 332 enclose the NR LBD domain; the sequence is DRSNKLMNFQ…KRLCAELLGA (232 aa).

Belongs to the nuclear hormone receptor family.

Its subcellular location is the nucleus. In terms of biological role, orphan nuclear receptor. The chain is Nuclear hormone receptor family member nhr-9 (nhr-9) from Caenorhabditis elegans.